The following is a 210-amino-acid chain: Large ribosomal subunit protein bL25 (210 aa).

Residues 191–200 (EAPAEGAAAP) are compositionally biased toward low complexity. The segment at 191–210 (EAPAEGAAAPAPAPAKKGKK) is disordered.

This sequence belongs to the bacterial ribosomal protein bL25 family. CTC subfamily. Part of the 50S ribosomal subunit; part of the 5S rRNA/L5/L18/L25 subcomplex. Contacts the 5S rRNA. Binds to the 5S rRNA independently of L5 and L18.

In terms of biological role, this is one of the proteins that binds to the 5S RNA in the ribosome where it forms part of the central protuberance. This chain is Large ribosomal subunit protein bL25, found in Paracidovorax citrulli (strain AAC00-1) (Acidovorax citrulli).